Here is a 131-residue protein sequence, read N- to C-terminus: Protein TIFY 5A (131 aa).

The EAR motif lies at 9-13 (LELRL). Disordered stretches follow at residues 14-44 (FPTS…EESQ) and 74-131 (REMK…HSRR). Residues 16–34 (TSYDSDSSDTTSVVESTSS) show a composition bias toward low complexity. In terms of domain architecture, Tify spans 39–74 (PNEESQRITIFYNGKMCFSSDVTHLQARSIISIASR). A compositionally biased stretch (polar residues) spans 79 to 100 (KSSSNGSDPPNKSTSFHHNQLP). Positions 105–127 (SMKKSLQSFLQKRKIRIQATSPY) match the Jas motif. The Nuclear localization signal signature appears at 106–113 (MKKSLQSF). The span at 122 to 131 (QATSPYHSRR) shows a compositional bias: polar residues.

Belongs to the TIFY/JAZ family. As to quaternary structure, interacts with TPL and weakly with COI1, but not with AFPH2/NINJA. Interacts with MYC2, MYB21, MYB24, TIFY10A/JAZ1, TIFY10B/JAZ2, TIFY6B/JAZ3, TIFY6A/JAZ4, TIFY11A/JAZ5, TIFY11B/JAZ6, TIFY7/JAZ9, TIFY9/JAZ10 and TIFY3B/JAZ12. Interacts with RHD6 and RSL1. In terms of assembly, (Microbial infection) Interacts with the pathogenic Pseudomonas syringae HopZ1a protein. Post-translationally, (Microbial infection) Acetylated by Pseudomonas syringae HopZ1a. Ubiquitinated.

It is found in the nucleus. Its function is as follows. Repressor of jasmonate responses. Unable to associate strongly with COI1 in the presence of jasmonoyl-isoleucine (JA-Ile) and is therefore more resistant to JA-mediated-degradation than other TIFY/JAZ proteins. Repress gene expression through direct recruitment of the corepressor TOPLESS to cognate transcription factors. Interacts with and suppresses RHD6 and RSL1 transcription factor activities to negatively regulate jasmonate-stimulated root hair development. The polypeptide is Protein TIFY 5A (Arabidopsis thaliana (Mouse-ear cress)).